The sequence spans 505 residues: Catalase (505 aa).

Catalysis depends on residues His-56 and Asn-129. Tyr-339 is a heme binding site.

The protein belongs to the catalase family. The cofactor is heme.

It is found in the cytoplasm. It carries out the reaction 2 H2O2 = O2 + 2 H2O. Decomposes hydrogen peroxide into water and oxygen; serves to protect cells from the toxic effects of hydrogen peroxide. This Helicobacter pylori (strain ATCC 700392 / 26695) (Campylobacter pylori) protein is Catalase (katA).